Consider the following 90-residue polypeptide: UPF0237 protein MMP0657 (90 aa).

Residues 5 to 79 form the ACT domain; the sequence is VITVVGVDKP…SEIGVKINVQ (75 aa).

Belongs to the UPF0237 family.

In Methanococcus maripaludis (strain DSM 14266 / JCM 13030 / NBRC 101832 / S2 / LL), this protein is UPF0237 protein MMP0657.